A 132-amino-acid polypeptide reads, in one-letter code: MQLSDPLGDLLTRIRNAQRSRHATCVSPASKLRANVLEALKREGYIRGYTSEELRPGISQLRVELKYNDGEPVIKEITRVSKPGRRVYSKIKELPRVYAGLGVSILSTPRGVLSDNEARAANVGGEVLCRVF.

It belongs to the universal ribosomal protein uS8 family. In terms of assembly, part of the 30S ribosomal subunit. Contacts proteins S5 and S12.

Functionally, one of the primary rRNA binding proteins, it binds directly to 16S rRNA central domain where it helps coordinate assembly of the platform of the 30S subunit. The polypeptide is Small ribosomal subunit protein uS8 (Granulibacter bethesdensis (strain ATCC BAA-1260 / CGDNIH1)).